The following is a 224-amino-acid chain: Urease accessory protein UreF (224 aa).

Belongs to the UreF family. In terms of assembly, ureD, UreF and UreG form a complex that acts as a GTP-hydrolysis-dependent molecular chaperone, activating the urease apoprotein by helping to assemble the nickel containing metallocenter of UreC. The UreE protein probably delivers the nickel.

Its subcellular location is the cytoplasm. In terms of biological role, required for maturation of urease via the functional incorporation of the urease nickel metallocenter. The polypeptide is Urease accessory protein UreF (Azotobacter vinelandii (strain DJ / ATCC BAA-1303)).